A 555-amino-acid chain; its full sequence is Potassium-transporting ATPase potassium-binding subunit (555 aa).

10 helical membrane-spanning segments follow: residues 2 to 22 (IWVAVVITMLLFILVAKPTGI), 60 to 80 (QYALSLVLLNGFMIVVVYFIF), 130 to 150 (IGITFLMFAAPATTLALVMAF), 173 to 193 (VFLPIAFVTALVFVALGVPQT), 246 to 266 (MSNILQMMLMMLLPTALPFTY), 278 to 298 (ILFVSLFMVFLLGFITITTSE), 374 to 394 (AGFVNIITYAIIAVFISGLMV), 412 to 432 (LIAVTILFHPLLILGFSALAL), 483 to 503 (LVMFLGRYFSLVTMLAVAASL), and 525 to 545 (GIFIGTIVIVGALTFFPMLVL).

This sequence belongs to the KdpA family. The system is composed of three essential subunits: KdpA, KdpB and KdpC.

It is found in the cell membrane. Functionally, part of the high-affinity ATP-driven potassium transport (or Kdp) system, which catalyzes the hydrolysis of ATP coupled with the electrogenic transport of potassium into the cytoplasm. This subunit binds the extracellular potassium ions and delivers the ions to the membrane domain of KdpB through an intramembrane tunnel. In Bacillus thuringiensis subsp. konkukian (strain 97-27), this protein is Potassium-transporting ATPase potassium-binding subunit.